The following is a 917-amino-acid chain: MIASHMIACLFTELNQNQVQKVDQFLYHMRLSDETLLEISRRFRKEMEKGLGATTHPTAAVKMLPTFVRSTPDGTEHGEFLALDLGGTNFRVLRVRVTDNGLQRVEMENQIYAIPEDIMRGSGTQLFDHIAECLANFMDKLQIKEKKLPLGFTFSFPCHQTKLDESFLVSWTKGFKSSGVEGRDVVDLIRKAIQRRGDFDIDIVAVVNDTVGTMMTCGYDDQNCEIGLIVGTGSNACYMEEMRHIDMVEGDEGRMCINMEWGAFGDDGTLNDIRTEFDREIDMGSLNPGKQLFEKMISGMYMGELVRLILVKMAKAELLFQGKLSPELLTTGSFETKDVSDIEEDKDGIEKAYQILMRLGLNPLQEDCVATHRICQIVSTRSASLCAATLAAVLWRIKENKGEERLRSTIGVDGSVYKKHPHFAKRLHKAVRRLVPDCDVRFLRSEDGSGKGAAMVTAVAYRLADQHRARQKTLESLKLSHEQLLEVKRRMKVEMEQGLSKETHAVAPVKMLPTYVCATPDGTEKGDFLALDLGGTNFRVLLVRVRNGKRRGVEMHNKIYSIPQEVMHGTGEELFDHIVQCIADFLEYMGMKGVSLPLGFTFSFPCQQNSLDQSILLKWTKGFKASGCEGEDVVTLLKEAIHRREEFDLDVVAVVNDTVGTMMTCGYEDPHCEVGLIVGTGSNACYMEEMRNVELVDGEEGRMCVNMEWGAFGDNGCLDDLRTVFDVAVDELSLNPGKQRFEKMISGMYLGEIVRNILIDFTKRGLLFRGRISERLKTRGIFETKFLSQIESDCLALLQVRAILRHLGLESTCDDSIIVKEVCTVVARRAAQLCGAGMAAVVDKIRENRGLDNLKVTVGVDGTLYKLHPHFAKVMHETVRDLAPKCDVSFLESEDGSGKGAALITAVACRIREAGQR.

Residue methionine 1 is modified to N-acetylmethionine. Residues 1–16 (MIASHMIACLFTELNQ) form a mitochondrial-binding peptide (MBP) region. 2 consecutive Hexokinase domains span residues 16 to 458 (QNQV…MVTA) and 464 to 906 (ADQH…LITA). ATP is bound by residues arginine 30 and 84–89 (DLGGTN). Positions 73-207 (DGTEHGEFLA…DFDIDIVAVV (135 aa)) are hexokinase small subdomain 1. 84-88 (DLGGT) contacts D-glucose 6-phosphate. D-glucose-binding positions include 155–156 (SF), 172–173 (TK), and 208–209 (ND). Positions 208 to 447 (NDTVGTMMTC…CDVRFLRSED (240 aa)) are hexokinase large subdomain 1. Residues aspartate 209 and threonine 232 each coordinate D-glucose 6-phosphate. D-glucose-binding positions include asparagine 235, glutamate 260, and 291-294 (QLFE). Residue 413–415 (DGS) coordinates D-glucose 6-phosphate. Residue 425–426 (KR) participates in ATP binding. D-glucose 6-phosphate-binding positions include serine 449 and 532–536 (DLGGT). The hexokinase small subdomain 2 stretch occupies residues 521–655 (DGTEKGDFLA…EFDLDVVAVV (135 aa)). Residue 532–537 (DLGGTN) participates in ATP binding. D-glucose-binding positions include 603 to 604 (SF), 620 to 621 (TK), and 656 to 657 (ND). The segment at 656-895 (NDTVGTMMTC…CDVSFLESED (240 aa)) is hexokinase large subdomain 2. Residues aspartate 657 and threonine 680 each coordinate D-glucose 6-phosphate. Threonine 680 is a binding site for ATP. D-glucose-binding positions include 682-683 (SN), glutamate 708, and 739-742 (QRFE). Residues 747-748 (GM), 784-788 (TKFLS), and 863-867 (TLYKL) each bind ATP. D-glucose 6-phosphate-binding positions include 861-863 (DGT) and serine 897.

This sequence belongs to the hexokinase family. Monomer. Interacts with TIGAR; the interaction increases hexokinase activity in a hypoxia- and HIF1A-dependent manner.

It localises to the mitochondrion outer membrane. The protein resides in the cytoplasm. The protein localises to the cytosol. It carries out the reaction a D-hexose + ATP = a D-hexose 6-phosphate + ADP + H(+). The enzyme catalyses D-fructose + ATP = D-fructose 6-phosphate + ADP + H(+). It catalyses the reaction D-glucose + ATP = D-glucose 6-phosphate + ADP + H(+). It functions in the pathway carbohydrate metabolism; hexose metabolism. Its pathway is carbohydrate degradation; glycolysis; D-glyceraldehyde 3-phosphate and glycerone phosphate from D-glucose: step 1/4. Hexokinase activity is specifically inhibited by 2,6-disubstituted glucosamines. Catalyzes the phosphorylation of hexose, such as D-glucose and D-fructose, to hexose 6-phosphate (D-glucose 6-phosphate and D-fructose 6-phosphate, respectively). Mediates the initial step of glycolysis by catalyzing phosphorylation of D-glucose to D-glucose 6-phosphate. Plays a key role in maintaining the integrity of the outer mitochondrial membrane by preventing the release of apoptogenic molecules from the intermembrane space and subsequent apoptosis. The polypeptide is Hexokinase-2 (Rattus norvegicus (Rat)).